A 765-amino-acid chain; its full sequence is Periplasmic beta-glucosidase (765 aa).

The first 20 residues, 1–20, serve as a signal peptide directing secretion; that stretch reads MKWLCSVGVAVSLAMQPALA. D287 is an active-site residue.

The protein belongs to the glycosyl hydrolase 3 family.

The protein resides in the periplasm. The enzyme catalyses Hydrolysis of terminal, non-reducing beta-D-glucosyl residues with release of beta-D-glucose.. This chain is Periplasmic beta-glucosidase (bglX), found in Salmonella typhimurium (strain LT2 / SGSC1412 / ATCC 700720).